Here is a 103-residue protein sequence, read N- to C-terminus: Large ribosomal subunit protein bL21 (103 aa).

Belongs to the bacterial ribosomal protein bL21 family. In terms of assembly, part of the 50S ribosomal subunit. Contacts protein L20.

Functionally, this protein binds to 23S rRNA in the presence of protein L20. This is Large ribosomal subunit protein bL21 from Lactobacillus delbrueckii subsp. bulgaricus (strain ATCC 11842 / DSM 20081 / BCRC 10696 / JCM 1002 / NBRC 13953 / NCIMB 11778 / NCTC 12712 / WDCM 00102 / Lb 14).